Reading from the N-terminus, the 1115-residue chain is MSFVHLQVHSGYSLLNSAAAVEELVSEADRLGYASLALTDDHVMYGAIQFYKACKARGINPIIGLTASVFTDDSELEAYPLVLLAKSNTGYQNLLKISSVLQSKSKGGLKPKWLHSYREGIIAITPGEKGYIETLLEGGLFEQAAQASLEFQSIFGKGAFYFSYQPFKGNQVLSEQILKLSEETGIPVTATGDVHYIRKEDKAAYRCLKAIKAGEKLTDAPAEDLPDLDLKPLEEMQNIYREHPEALQASVEIAEQCRVDVSLGQTRLPSFPTPDGTSADDYLTDICMEGLRSRFGKPDERYLRRLQYELDVIKRMKFSDYFLIVWDFMKHAHEKGIVTGPGRGSAAGSLVAYVLYITDVDPIKHHLLFERFLNPERVSMPDIDIDFPDTRRDEVIQYVQQKYGAMHVAQIITFGTLAAKAALRDVGRVFGVSPKEADQLAKLIPSRPGMTLDEARQQSPQLDKRLRESSLLQQVYSIARKIEGLPRHASTHAAGVVLSEEPLTDVVPLQEGHEGIYLTQYAMDHLEDLGLLKMDFLGLRNLTLIESITSMIEKEENIKIDLSSISYSDDKTFSLLSKGDTTGIFQLESAGMRSVLKRLKPSGLEDIVAVNALYRPGPMENIPLFIDRKHGRAPVHYPHEDLRSILEDTYGVIVYQEQIMMIASRMAGFSLGEADLLRRAVSKKKKEILDRERSHFVEGCLKKEYSVDTANEVYDLIVKFANYGFNRSHAVAYSMIGCQLAYLKAHYPLYFMCGLLTSVIGNEDKISQYLYEAKGSGIRILPPSVNKSSFPFTVENGSVRYSLRAIKSVGVSAVKDIYKARKEKPFEDLFDFCFRVPSKSVNRKMLEALIFSGAMDEFGQNRATLLASIDVALEHAELFAADDDQMGLFLDESFSIKPKYVETEELPLVDLLAFEKETLGIYFSNHPLSAFRKQLTAQGAVSILQAQRAVKRQLSLGVLLSKIKTIRTKTGQNMAFLTLSDETGEMEAVVFPEQFRQLSPVLREGALLFTAGKCEVRQDKIQFIMSRAELLEDMDAEKAPSVYIKIESSQHSQEILAKIKRILLEHKGETGVYLYYERQKQTIKLPESFHINADHQVLYRLKELLGQKNVVLKQW.

Belongs to the DNA polymerase type-C family. DnaE subfamily. As to quaternary structure, DNA polymerase III contains a core (composed of alpha, epsilon and theta chains) that associates with a tau subunit. This core dimerizes to form the PolIII' complex. PolIII' associates with the gamma complex (composed of gamma, delta, delta', psi and chi chains) and with the beta chain to form the complete DNA polymerase III complex. Interacts with SSB (sbbA) via the latter's 6 C-terminal residues.

It is found in the cytoplasm. It localises to the nucleoid. It catalyses the reaction DNA(n) + a 2'-deoxyribonucleoside 5'-triphosphate = DNA(n+1) + diphosphate. In terms of biological role, DNA polymerase III is a complex, multichain enzyme responsible for most of the replicative synthesis in bacteria. This DNA polymerase also exhibits 3' to 5' exonuclease activity. The alpha chain is the DNA polymerase. This Bacillus subtilis (strain 168) protein is DNA polymerase III subunit alpha (dnaE).